The following is a 399-amino-acid chain: S-adenosylmethionine synthase (399 aa).

His17 lines the ATP pocket. A Mg(2+)-binding site is contributed by Asp19. Glu45 is a binding site for K(+). Residues Glu58 and Gln101 each coordinate L-methionine. The flexible loop stretch occupies residues 101–111; sequence QSADIAMGVDQ. ATP-binding positions include 177 to 179, 244 to 245, Asp253, 259 to 260, Ala276, and Lys280; these read DGK, RF, and RK. Asp253 is an L-methionine binding site. Lys284 lines the L-methionine pocket.

Belongs to the AdoMet synthase family. As to quaternary structure, homotetramer; dimer of dimers. Mg(2+) is required as a cofactor. K(+) serves as cofactor.

The protein localises to the cytoplasm. It carries out the reaction L-methionine + ATP + H2O = S-adenosyl-L-methionine + phosphate + diphosphate. The protein operates within amino-acid biosynthesis; S-adenosyl-L-methionine biosynthesis; S-adenosyl-L-methionine from L-methionine: step 1/1. Functionally, catalyzes the formation of S-adenosylmethionine (AdoMet) from methionine and ATP. The overall synthetic reaction is composed of two sequential steps, AdoMet formation and the subsequent tripolyphosphate hydrolysis which occurs prior to release of AdoMet from the enzyme. This is S-adenosylmethionine synthase from Bacillus thuringiensis subsp. konkukian (strain 97-27).